A 132-amino-acid polypeptide reads, in one-letter code: Small ribosomal subunit protein uS9 (132 aa).

The segment at 104-132 (GYLTRDPRMKERKKYGLRKARRAPQFSKR) is disordered. Residues 113–132 (KERKKYGLRKARRAPQFSKR) are compositionally biased toward basic residues.

It belongs to the universal ribosomal protein uS9 family.

This is Small ribosomal subunit protein uS9 from Natranaerobius thermophilus (strain ATCC BAA-1301 / DSM 18059 / JW/NM-WN-LF).